The following is a 167-amino-acid chain: Transcriptional regulator MraZ (167 aa).

SpoVT-AbrB domains are found at residues 8–51 (ESNH…YGDH) and 92–135 (SFPT…NPAT).

Belongs to the MraZ family. In terms of assembly, forms oligomers.

It is found in the cytoplasm. It localises to the nucleoid. The polypeptide is Transcriptional regulator MraZ (Ruegeria pomeroyi (strain ATCC 700808 / DSM 15171 / DSS-3) (Silicibacter pomeroyi)).